The following is a 156-amino-acid chain: Putative pre-16S rRNA nuclease (156 aa).

This sequence belongs to the YqgF nuclease family.

It localises to the cytoplasm. Could be a nuclease involved in processing of the 5'-end of pre-16S rRNA. The sequence is that of Putative pre-16S rRNA nuclease from Caulobacter vibrioides (strain ATCC 19089 / CIP 103742 / CB 15) (Caulobacter crescentus).